Here is a 359-residue protein sequence, read N- to C-terminus: DNA-directed RNA polymerase subunit alpha (359 aa).

Residues 1–226 (MLISQRPSLA…ELFGLARELN (226 aa)) form an alpha N-terminal domain (alpha-NTD) region. The segment at 241–359 (ADTIAAYAMP…GQDYAETEQL (119 aa)) is alpha C-terminal domain (alpha-CTD). Positions 315 to 359 (FDPSAAAAEYPSEGWASETETVGGLGRVEDNGYDDGQDYAETEQL) are disordered. A compositionally biased stretch (acidic residues) spans 345–359 (NGYDDGQDYAETEQL).

This sequence belongs to the RNA polymerase alpha chain family. As to quaternary structure, homodimer. The RNAP catalytic core consists of 2 alpha, 1 beta, 1 beta' and 1 omega subunit. When a sigma factor is associated with the core the holoenzyme is formed, which can initiate transcription.

It catalyses the reaction RNA(n) + a ribonucleoside 5'-triphosphate = RNA(n+1) + diphosphate. In terms of biological role, DNA-dependent RNA polymerase catalyzes the transcription of DNA into RNA using the four ribonucleoside triphosphates as substrates. The protein is DNA-directed RNA polymerase subunit alpha of Saccharopolyspora erythraea (strain ATCC 11635 / DSM 40517 / JCM 4748 / NBRC 13426 / NCIMB 8594 / NRRL 2338).